Reading from the N-terminus, the 648-residue chain is Actin-related protein 5 (648 aa).

The disordered stretch occupies residues 34 to 59 (LTKPRKDRKKEAAASEGSASQTTVEQ). 2 coiled-coil regions span residues 277–311 (TAEQKQEKRRELAHRLLDIKKNREQEKLREDEQQL) and 340–364 (TLEDLDSLIATINSRIKRAQERAQS). 2 disordered regions span residues 357–385 (RAQERAQSGPRPSKQQERLNKMPKPPEGM) and 403–455 (GRKQ…GMND). Positions 414–428 (EQAKRHTHAAQERMR) are enriched in basic and acidic residues. Residues Ser-471 and Ser-473 each carry the phosphoserine modification.

This sequence belongs to the actin family. ARP5 subfamily. Component of the chromatin remodeling Ino80 complex.

It localises to the nucleus. In terms of biological role, proposed core component of the chromatin remodeling Ino80 complex which is involved in transcriptional regulation, DNA replication and probably DNA repair. In Drosophila melanogaster (Fruit fly), this protein is Actin-related protein 5.